Reading from the N-terminus, the 637-residue chain is Biosynthetic arginine decarboxylase (637 aa).

Position 101 is an N6-(pyridoxal phosphate)lysine (K101). A substrate-binding site is contributed by 286–296; the sequence is FDVGGGLAVDY.

The protein belongs to the Orn/Lys/Arg decarboxylase class-II family. SpeA subfamily. It depends on Mg(2+) as a cofactor. Requires pyridoxal 5'-phosphate as cofactor.

The catalysed reaction is L-arginine + H(+) = agmatine + CO2. Its pathway is amine and polyamine biosynthesis; agmatine biosynthesis; agmatine from L-arginine: step 1/1. Functionally, catalyzes the biosynthesis of agmatine from arginine. This chain is Biosynthetic arginine decarboxylase, found in Shewanella putrefaciens (strain CN-32 / ATCC BAA-453).